A 411-amino-acid polypeptide reads, in one-letter code: MPAGERLPGAPAREERIVVHVDMDCFYASCERRREPALRGAPVVVGMGYEPDQTVGAVATASYEAREYGVESAQAISAALERLPRKADAPDASAAGYYRPVDMAYYESVSESVSEILHGLGDPVREVSIDEAYLDVTDRTAWDVAAGFGRHIKQRIARSVGVPASVGIAPDMSTAKLASDHEKPDGLVVVPPESVQSFLAPLDVADLHGVGPVHARALRERGIETVGELADADPYVLEAAFGERGREFHRRARGADSRPVEPRGKPKSLSRESSFDGATESFDRVREQAAALSGAVADRASRTNASYRTIGVKVVTPPYDVQTRAESLPGPVDDPALLEAVSQSLLDEFEGAAVRKVGVRVSNLVFSEREQATLAGFSGDETGDGGGHEGGACGGAGRGSCGGQTTLDEFT.

Residues 18 to 211 enclose the UmuC domain; the sequence is VVHVDMDCFY…LDVADLHGVG (194 aa). Mg(2+) is bound by residues Asp-22 and Asp-130. Glu-131 is a catalytic residue. Disordered stretches follow at residues 248–280 and 376–411; these read FHRRARGADSRPVEPRGKPKSLSRESSFDGATE and GFSGDETGDGGGHEGGACGGAGRGSCGGQTTLDEFT. A compositionally biased stretch (basic and acidic residues) spans 253 to 274; that stretch reads RGADSRPVEPRGKPKSLSRESS. Positions 384-402 are enriched in gly residues; sequence DGGGHEGGACGGAGRGSCG.

The protein belongs to the DNA polymerase type-Y family. Monomer. Mg(2+) serves as cofactor.

It is found in the cytoplasm. The enzyme catalyses DNA(n) + a 2'-deoxyribonucleoside 5'-triphosphate = DNA(n+1) + diphosphate. Functionally, poorly processive, error-prone DNA polymerase involved in untargeted mutagenesis. Copies undamaged DNA at stalled replication forks, which arise in vivo from mismatched or misaligned primer ends. These misaligned primers can be extended by PolIV. Exhibits no 3'-5' exonuclease (proofreading) activity. May be involved in translesional synthesis. In Halobacterium salinarum (strain ATCC 29341 / DSM 671 / R1), this protein is DNA polymerase IV.